The primary structure comprises 304 residues: Glutaminase (304 aa).

Substrate-binding residues include serine 63, asparagine 113, glutamate 157, asparagine 164, tyrosine 188, tyrosine 240, and valine 258.

Belongs to the glutaminase family. As to quaternary structure, homotetramer.

It carries out the reaction L-glutamine + H2O = L-glutamate + NH4(+). The protein is Glutaminase of Ralstonia nicotianae (strain ATCC BAA-1114 / GMI1000) (Ralstonia solanacearum).